Consider the following 142-residue polypeptide: Hemoglobin subunit alpha-A (142 aa).

The Globin domain occupies V2 to R142. O2 is bound at residue H59. Position 88 (H88) interacts with heme b.

The protein belongs to the globin family. As to quaternary structure, heterotetramer of two alpha chains and two beta chains. As to expression, red blood cells.

In terms of biological role, involved in oxygen transport from the lung to the various peripheral tissues. This is Hemoglobin subunit alpha-A (HBAA) from Anas platyrhynchos (Mallard).